A 261-amino-acid polypeptide reads, in one-letter code: Precorrin-6A synthase [deacetylating] (261 aa).

The enzyme catalyses precorrin-5 + S-adenosyl-L-methionine + H2O = precorrin-6A + acetate + S-adenosyl-L-homocysteine + 2 H(+). It participates in cofactor biosynthesis; adenosylcobalamin biosynthesis; cob(II)yrinate a,c-diamide from precorrin-2 (aerobic route): step 5/10. In terms of biological role, catalyzes the methylation of C-1 in precorrin-5 and the subsequent extrusion of acetic acid from the resulting intermediate to form cobalt-precorrin-6A. The polypeptide is Precorrin-6A synthase [deacetylating] (cobF) (Sinorhizobium sp).